The chain runs to 956 residues: Translation initiation factor IF-2 (956 aa).

Residues 50–351 (FPADSGGAAN…APSIGGVQVP (302 aa)) are disordered. Over residues 64–95 (APKPARAPKPAPKAAPAPPVEEAPAEPAPPAA) the composition is skewed to pro residues. Composition is skewed to low complexity over residues 96–107 (PEVVAAPEAPVA) and 121–136 (PEAP…ARPA). The segment covering 146–155 (AAEKPADTRT) has biased composition (basic and acidic residues). Composition is skewed to gly residues over residues 171–192 (RPGG…GGPR) and 206–234 (RPGG…GQGG). Low complexity predominate over residues 235–254 (SRPSPGMMPGRSAVGRPGAP). Gly residues predominate over residues 255–320 (ARGGSGGPGG…GTQGAFGRAG (66 aa)). Residues 324–333 (VRARKSRRAK) show a composition bias toward basic residues. A tr-type G domain is found at 448–619 (ARPPVVTVMG…AVLLTADAAL (172 aa)). Positions 457–464 (GHVDHGKT) are G1. Position 457 to 464 (457 to 464 (GHVDHGKT)) interacts with GTP. The tract at residues 482–486 (GITQH) is G2. Positions 507–510 (DTPG) are G3. GTP-binding positions include 507–511 (DTPGH) and 561–564 (NKVD). Residues 561–564 (NKVD) are G4. The tract at residues 597–599 (SAK) is G5.

It belongs to the TRAFAC class translation factor GTPase superfamily. Classic translation factor GTPase family. IF-2 subfamily.

It is found in the cytoplasm. Its function is as follows. One of the essential components for the initiation of protein synthesis. Protects formylmethionyl-tRNA from spontaneous hydrolysis and promotes its binding to the 30S ribosomal subunits. Also involved in the hydrolysis of GTP during the formation of the 70S ribosomal complex. This is Translation initiation factor IF-2 from Beutenbergia cavernae (strain ATCC BAA-8 / DSM 12333 / CCUG 43141 / JCM 11478 / NBRC 16432 / NCIMB 13614 / HKI 0122).